Here is a 261-residue protein sequence, read N- to C-terminus: Acyl-[acyl-carrier-protein]--UDP-N-acetylglucosamine O-acyltransferase (261 aa).

Belongs to the transferase hexapeptide repeat family. LpxA subfamily. In terms of assembly, homotrimer.

It is found in the cytoplasm. It carries out the reaction a (3R)-hydroxyacyl-[ACP] + UDP-N-acetyl-alpha-D-glucosamine = a UDP-3-O-[(3R)-3-hydroxyacyl]-N-acetyl-alpha-D-glucosamine + holo-[ACP]. It participates in glycolipid biosynthesis; lipid IV(A) biosynthesis; lipid IV(A) from (3R)-3-hydroxytetradecanoyl-[acyl-carrier-protein] and UDP-N-acetyl-alpha-D-glucosamine: step 1/6. Functionally, involved in the biosynthesis of lipid A, a phosphorylated glycolipid that anchors the lipopolysaccharide to the outer membrane of the cell. The chain is Acyl-[acyl-carrier-protein]--UDP-N-acetylglucosamine O-acyltransferase from Aquifex aeolicus (strain VF5).